The sequence spans 84 residues: Large ribosomal subunit protein bL27 (84 aa).

Positions 1–24 are disordered; the sequence is MAHKKGAASTKNGRDSNSQRLGVK. A compositionally biased stretch (polar residues) spans 9–20; it reads STKNGRDSNSQR.

Belongs to the bacterial ribosomal protein bL27 family.

The chain is Large ribosomal subunit protein bL27 from Nocardioides sp. (strain ATCC BAA-499 / JS614).